A 529-amino-acid polypeptide reads, in one-letter code: Retinoic acid-induced protein 2 (529 aa).

Disordered stretches follow at residues 1-21 and 400-419; these read MDDL…PTLA and SHSS…HPGS. Residues 407–416 show a composition bias toward polar residues; sequence GTEMVSQPSH.

This chain is Retinoic acid-induced protein 2 (Rai2), found in Mus musculus (Mouse).